The primary structure comprises 368 residues: uncharacterized protein (368 aa).

2 disordered regions span residues 1–22 (MEKS…LPEK) and 282–317 (KHLG…EPPA). Residues 293-311 (KRVEKMKKAYKESKEEKAS) are compositionally biased toward basic and acidic residues.

This is an uncharacterized protein from Mus musculus (Mouse).